A 222-amino-acid polypeptide reads, in one-letter code: Ribonuclease HII (222 aa).

The region spanning 17-206 is the RNase H type-2 domain; it reads DLVAGVDEVG…VRAAHEARAS (190 aa). Positions 23, 24, and 115 each coordinate a divalent metal cation.

The protein belongs to the RNase HII family. It depends on Mn(2+) as a cofactor. Mg(2+) is required as a cofactor.

The protein localises to the cytoplasm. The catalysed reaction is Endonucleolytic cleavage to 5'-phosphomonoester.. Endonuclease that specifically degrades the RNA of RNA-DNA hybrids. The chain is Ribonuclease HII from Pseudomonas savastanoi pv. phaseolicola (strain 1448A / Race 6) (Pseudomonas syringae pv. phaseolicola (strain 1448A / Race 6)).